The following is a 515-amino-acid chain: Bifunctional purine biosynthesis protein PurH (515 aa).

An MGS-like domain is found at Met-1–Val-145.

It belongs to the PurH family.

It carries out the reaction (6R)-10-formyltetrahydrofolate + 5-amino-1-(5-phospho-beta-D-ribosyl)imidazole-4-carboxamide = 5-formamido-1-(5-phospho-D-ribosyl)imidazole-4-carboxamide + (6S)-5,6,7,8-tetrahydrofolate. The enzyme catalyses IMP + H2O = 5-formamido-1-(5-phospho-D-ribosyl)imidazole-4-carboxamide. It functions in the pathway purine metabolism; IMP biosynthesis via de novo pathway; 5-formamido-1-(5-phospho-D-ribosyl)imidazole-4-carboxamide from 5-amino-1-(5-phospho-D-ribosyl)imidazole-4-carboxamide (10-formyl THF route): step 1/1. Its pathway is purine metabolism; IMP biosynthesis via de novo pathway; IMP from 5-formamido-1-(5-phospho-D-ribosyl)imidazole-4-carboxamide: step 1/1. In Streptococcus pneumoniae (strain Taiwan19F-14), this protein is Bifunctional purine biosynthesis protein PurH.